The chain runs to 208 residues: Orotidine 5'-phosphate decarboxylase (208 aa).

Substrate is bound by residues Asp-7, Lys-29, 57–66 (DLKLADIPNT), Ser-109, 162–172 (PGIGAQGGKAK), Gly-185, and Arg-186. The active-site Proton donor is Lys-59.

This sequence belongs to the OMP decarboxylase family. Type 1 subfamily. In terms of assembly, homodimer.

The catalysed reaction is orotidine 5'-phosphate + H(+) = UMP + CO2. Its pathway is pyrimidine metabolism; UMP biosynthesis via de novo pathway; UMP from orotate: step 2/2. Functionally, catalyzes the decarboxylation of orotidine 5'-monophosphate (OMP) to uridine 5'-monophosphate (UMP). The polypeptide is Orotidine 5'-phosphate decarboxylase (Pyrococcus abyssi (strain GE5 / Orsay)).